Consider the following 627-residue polypeptide: Phosphomethylpyrimidine synthase (627 aa).

Positions 1-21 are disordered; it reads MSVQSNKNLSESAQVDQQSIQ. Substrate is bound by residues N231, M260, Y289, H325, 345-347, 386-389, and E425; these read SRG and DGLR. Residue H429 coordinates Zn(2+). Y452 is a binding site for substrate. Zn(2+) is bound at residue H493. The [4Fe-4S] cluster site is built by C573, C576, and C581.

The protein belongs to the ThiC family. In terms of assembly, homodimer. Requires [4Fe-4S] cluster as cofactor.

It carries out the reaction 5-amino-1-(5-phospho-beta-D-ribosyl)imidazole + S-adenosyl-L-methionine = 4-amino-2-methyl-5-(phosphooxymethyl)pyrimidine + CO + 5'-deoxyadenosine + formate + L-methionine + 3 H(+). It functions in the pathway cofactor biosynthesis; thiamine diphosphate biosynthesis. In terms of biological role, catalyzes the synthesis of the hydroxymethylpyrimidine phosphate (HMP-P) moiety of thiamine from aminoimidazole ribotide (AIR) in a radical S-adenosyl-L-methionine (SAM)-dependent reaction. In Stutzerimonas stutzeri (strain A1501) (Pseudomonas stutzeri), this protein is Phosphomethylpyrimidine synthase.